A 260-amino-acid chain; its full sequence is Hydroxyacylglutathione hydrolase (260 aa).

H61, H63, D65, H66, H119, D138, and H176 together coordinate Zn(2+).

The protein belongs to the metallo-beta-lactamase superfamily. Glyoxalase II family. In terms of assembly, monomer. Zn(2+) serves as cofactor.

The catalysed reaction is an S-(2-hydroxyacyl)glutathione + H2O = a 2-hydroxy carboxylate + glutathione + H(+). It participates in secondary metabolite metabolism; methylglyoxal degradation; (R)-lactate from methylglyoxal: step 2/2. Functionally, thiolesterase that catalyzes the hydrolysis of S-D-lactoyl-glutathione to form glutathione and D-lactic acid. The protein is Hydroxyacylglutathione hydrolase of Brucella suis (strain ATCC 23445 / NCTC 10510).